We begin with the raw amino-acid sequence, 177 residues long: Large ribosomal subunit protein uL10 (177 aa).

The protein belongs to the universal ribosomal protein uL10 family. As to quaternary structure, part of the ribosomal stalk of the 50S ribosomal subunit. The N-terminus interacts with L11 and the large rRNA to form the base of the stalk. The C-terminus forms an elongated spine to which L12 dimers bind in a sequential fashion forming a multimeric L10(L12)X complex.

Its function is as follows. Forms part of the ribosomal stalk, playing a central role in the interaction of the ribosome with GTP-bound translation factors. The protein is Large ribosomal subunit protein uL10 of Leptospira biflexa serovar Patoc (strain Patoc 1 / Ames).